An 89-amino-acid polypeptide reads, in one-letter code: Large ribosomal subunit protein bL31B (89 aa).

This sequence belongs to the bacterial ribosomal protein bL31 family. Type B subfamily. As to quaternary structure, part of the 50S ribosomal subunit.

This chain is Large ribosomal subunit protein bL31B, found in Enterococcus faecalis (strain ATCC 700802 / V583).